Consider the following 339-residue polypeptide: NADH-quinone oxidoreductase subunit H (339 aa).

Helical transmembrane passes span 9–29, 50–70, 82–102, 115–135, 161–181, 187–207, 235–255, 275–295, and 311–331; these read IFPLIIIALKVVAITIPLILC, PNVVGPFGLLQPIADAVKLLF, ILFILAPMITFILSLIGWAVI, VGVLYILAISSLSVYGIIIAG, MGLVIITVLLTTGTLNLSEII, IPWWIDLMLLPMGVVFFISVL, MGFALFFLGEYANMILVSAMT, IPGFFWFVFKVGFLLFCFLWI, and GWKVFLPLTLFWVVLVSSVLV.

This sequence belongs to the complex I subunit 1 family. NDH-1 is composed of 14 different subunits. Subunits NuoA, H, J, K, L, M, N constitute the membrane sector of the complex.

Its subcellular location is the cell inner membrane. The catalysed reaction is a quinone + NADH + 5 H(+)(in) = a quinol + NAD(+) + 4 H(+)(out). Its function is as follows. NDH-1 shuttles electrons from NADH, via FMN and iron-sulfur (Fe-S) centers, to quinones in the respiratory chain. The immediate electron acceptor for the enzyme in this species is believed to be ubiquinone. Couples the redox reaction to proton translocation (for every two electrons transferred, four hydrogen ions are translocated across the cytoplasmic membrane), and thus conserves the redox energy in a proton gradient. This subunit may bind ubiquinone. The sequence is that of NADH-quinone oxidoreductase subunit H from Rickettsia rickettsii (strain Iowa).